The primary structure comprises 134 residues: Large ribosomal subunit protein uL18 (134 aa).

It belongs to the universal ribosomal protein uL18 family. Part of the 50S ribosomal subunit; part of the 5S rRNA/L5/L18/L25 subcomplex. Contacts the 5S and 23S rRNAs.

Its function is as follows. This is one of the proteins that bind and probably mediate the attachment of the 5S RNA into the large ribosomal subunit, where it forms part of the central protuberance. This is Large ribosomal subunit protein uL18 from Corynebacterium glutamicum (strain ATCC 13032 / DSM 20300 / JCM 1318 / BCRC 11384 / CCUG 27702 / LMG 3730 / NBRC 12168 / NCIMB 10025 / NRRL B-2784 / 534).